A 274-amino-acid chain; its full sequence is Secreted RxLR effector protein 144 (274 aa).

A signal peptide spans 1–20; sequence MRPWLLLLVGLSSFFALSTS. Residues 49-72 carry the RxLR-dEER motif; sequence RKLRAFGGDTNTLKDSGKARREEK.

Belongs to the RxLR effector family.

It is found in the secreted. It localises to the host nucleus. The protein resides in the host cytoplasm. In terms of biological role, secreted effector that completely suppresses the host cell death induced by cell death-inducing proteins. The protein is Secreted RxLR effector protein 144 of Plasmopara viticola (Downy mildew of grapevine).